Consider the following 308-residue polypeptide: Ribosomal RNA small subunit methyltransferase H (308 aa).

Residues 34 to 36 (GGH), Asp54, Phe85, Asp99, and Gln106 each bind S-adenosyl-L-methionine.

The protein belongs to the methyltransferase superfamily. RsmH family.

It localises to the cytoplasm. The catalysed reaction is cytidine(1402) in 16S rRNA + S-adenosyl-L-methionine = N(4)-methylcytidine(1402) in 16S rRNA + S-adenosyl-L-homocysteine + H(+). Its function is as follows. Specifically methylates the N4 position of cytidine in position 1402 (C1402) of 16S rRNA. The chain is Ribosomal RNA small subunit methyltransferase H from Dichelobacter nodosus (strain VCS1703A).